The primary structure comprises 357 residues: Red-sensitive opsin (357 aa).

Residues 1–49 are Extracellular-facing; sequence MAEQWGKQVFAARRQNEDTTRGSAFTYTNSNHTRDPFEGPNYHIAPRWV. The N-linked (GlcNAc...) asparagine glycan is linked to Asn31. A helical membrane pass occupies residues 50-74; the sequence is YNLATLWMFFVVVLSVFTNGLVLVA. Residues 75-86 lie on the Cytoplasmic side of the membrane; the sequence is TAKFKKLRHPLN. Residues 87–112 form a helical membrane-spanning segment; the sequence is WILSNLAIADLGETVFASTISVCNQF. The Extracellular portion of the chain corresponds to 113-126; that stretch reads FGYFILGHPMCVFE. Residues Cys123 and Cys200 are joined by a disulfide bond. Residues 127-146 form a helical membrane-spanning segment; it reads GYVVSTCGIAALWSLTIISW. The Cytoplasmic segment spans residues 147–165; the sequence is ERWVVVCKPFGNVKFDAKW. Residues 166–189 traverse the membrane as a helical segment; sequence AIGGIVFSWVWSAVWCAPPVFGWS. Residues 190–215 lie on the Extracellular side of the membrane; the sequence is RYWPHGLKTSCGPDVFSGSDDPGVQS. The chain crosses the membrane as a helical span at residues 216 to 243; the sequence is YMIVLMITCCIIPLAIIILCYLAVWLAI. The Cytoplasmic segment spans residues 244 to 265; that stretch reads RAVAMQQKESESTQKAEREVSR. A helical transmembrane segment spans residues 266-289; it reads MVVVMIVAYCVCWGPYTFFACFAA. Topologically, residues 290–297 are extracellular; the sequence is ANPGYAFH. A helical membrane pass occupies residues 298 to 322; it reads PLAAAMPAYFAKSATIYNPVIYVFM. The residue at position 309 (Lys309) is an N6-(retinylidene)lysine. At 323–357 the chain is on the cytoplasmic side; sequence NRQFRTCIMQLFGKQVDDGSEVSTSKTEVSSVAPA.

This sequence belongs to the G-protein coupled receptor 1 family. Opsin subfamily. Post-translationally, phosphorylated on some or all of the serine and threonine residues present in the C-terminal region. As to expression, the color pigments are found in the cone photoreceptor cells.

The protein resides in the membrane. In terms of biological role, visual pigments are the light-absorbing molecules that mediate vision. They consist of an apoprotein, opsin, covalently linked to cis-retinal. The sequence is that of Red-sensitive opsin from Oryzias latipes (Japanese rice fish).